A 495-amino-acid chain; its full sequence is NADP/NAD-dependent aldehyde dehydrogenase PuuC (495 aa).

Residue 244-249 participates in NAD(+) binding; it reads GSTRTG. Active-site residues include Glu-267 and Cys-302.

The protein belongs to the aldehyde dehydrogenase family.

It carries out the reaction an aldehyde + NADP(+) + H2O = a carboxylate + NADPH + 2 H(+). The enzyme catalyses an aldehyde + NAD(+) + H2O = a carboxylate + NADH + 2 H(+). It catalyses the reaction 4-(gamma-L-glutamylamino)butanal + NADP(+) + H2O = 4-(gamma-L-glutamylamino)butanoate + NADPH + 2 H(+). The catalysed reaction is 4-(gamma-L-glutamylamino)butanal + NAD(+) + H2O = 4-(gamma-L-glutamylamino)butanoate + NADH + 2 H(+). Its pathway is amine and polyamine degradation; putrescine degradation; 4-aminobutanoate from putrescine: step 3/4. With respect to regulation, lithium ions exhibits the highest inhibition (97%). To a lesser extent (5-20%), potassium, sodium, and ammonium ions also inhibit PuuC activity. Transition metals, such as copper and zinc ions inhibit PuuC activity by more than 90%. The presence of heavy metals (mercury, silver) or sodium hydrogensulfite in the reaction mixture completely inactivate PuuC; in contrast, disulfide reductants such as DTT and 2-mercaptoethanol significantly increase its activity by 75% and 27%, respectively. In terms of biological role, catalyzes the oxidation of 3-hydroxypropionaldehyde (3-HPA) to 3-hydroxypropionic acid (3-HP). It acts preferentially with NAD but can also use NADP. 3-HPA appears to be the most suitable substrate for PuuC followed by isovaleraldehyde, propionaldehyde, butyraldehyde, and valeraldehyde. It might play a role in propionate and/or acetic acid metabolisms. Also involved in the breakdown of putrescine through the oxidation of gamma-Glu-gamma-aminobutyraldehyde to gamma-Glu-gamma-aminobutyrate (gamma-Glu-GABA). The chain is NADP/NAD-dependent aldehyde dehydrogenase PuuC from Escherichia coli (strain K12).